The primary structure comprises 472 residues: H(+)/Cl(-) exchange transporter ClcA (472 aa).

Topologically, residues 1 to 32 are cytoplasmic; the sequence is MKAETPSFEAHQFVRVRRGDAVRRLIQRDKTP. Residues 33–69 form a helical membrane-spanning segment; it reads LAVLLMAAVVGTLAGLVGVAFEKSVNWVQNQRIGALA. Topologically, residues 70–76 are periplasmic; it reads QVADHWY. A helical transmembrane segment spans residues 77-100; the sequence is LVWPLAFILSALLAMVGYFLVRRF. A Selectivity filter part_1 motif is present at residues 106 to 110; sequence GSGIP. S107 serves as a coordination point for chloride. Positions 109 to 116 form an intramembrane region, helical; that stretch reads IPEIEGAL. Residues 117 to 123 lie on the Cytoplasmic side of the membrane; it reads EELRPVR. The next 2 membrane-spanning stretches (helical) occupy residues 124 to 141 and 148 to 166; these read WWRVLPVKFIGGMGTLGA and EGPMVQLGGNIGRMVLDIF. The Selectivity filter part_2 motif lies at 146-150; the sequence is GREGP. At 167 to 176 the chain is on the cytoplasmic side; sequence RMRSPEARHT. Intramembrane regions (helical) lie at residues 177–189 and 193–201; these read LLATGAASGLSAA and PLAGILFII. Residues 202 to 214 lie on the Cytoplasmic side of the membrane; sequence EEMRPQFRYNLIS. Residues 215 to 232 traverse the membrane as a helical segment; sequence IKAVFTGVIMSSIVFRIF. Topologically, residues 233 to 252 are periplasmic; the sequence is NGEAAIIEVGKLSNAPVNTL. A helical membrane pass occupies residues 253-281; sequence WLYLVLGMLFGCFGPLFNFLVLRTQDIFQ. Residues 282–287 lie on the Cytoplasmic side of the membrane; the sequence is RIHGGN. A helical membrane pass occupies residues 288–309; it reads IKTWVLMGGVIGGICGLLGLMQ. The Periplasmic portion of the chain corresponds to 310–329; it reads PSAVGGGFNLIPIAAAGNFS. The next 2 membrane-spanning stretches (helical) occupy residues 330–349 and 355–376; these read VGLLLFIFIARVVTTLICFS and GIFAPMLALGTLLGTAFGMAAI. Residues 355–359 carry the Selectivity filter part_3 motif; the sequence is GIFAP. Chloride is bound by residues I356 and F357. Topologically, residues 377–386 are periplasmic; sequence PLFPAYHLDA. Positions 387–401 form an intramembrane region, helical; sequence GTFAIAGMGALLAAS. Residues 402-404 constitute an intramembrane region (note=Loop between two helices); that stretch reads VRA. Positions 405 to 416 form an intramembrane region, helical; that stretch reads PLTGIVLVLEMT. Residues 417 to 421 constitute an intramembrane region (note=Loop between two helices); that stretch reads DNYQL. The helical transmembrane segment at 422-438 threads the bilayer; that stretch reads ILPMIITCLGATLLAQF. Topologically, residues 439 to 472 are cytoplasmic; sequence LGGKPLYSTILQRTLAKQEAEQAAKAQQAPRENT. Chloride is bound at residue Y445.

This sequence belongs to the chloride channel (TC 2.A.49) family. ClcA subfamily. In terms of assembly, homodimer.

It localises to the cell inner membrane. The catalysed reaction is 2 chloride(in) + H(+)(out) = 2 chloride(out) + H(+)(in). Its function is as follows. Proton-coupled chloride transporter. Functions as antiport system and exchanges two chloride ions for 1 proton. Probably acts as an electrical shunt for an outwardly-directed proton pump that is linked to amino acid decarboxylation, as part of the extreme acid resistance (XAR) response. This is H(+)/Cl(-) exchange transporter ClcA from Klebsiella pneumoniae (strain 342).